The sequence spans 413 residues: Glutaminase (413 aa).

Residues 23-307 are glutaminase; the sequence is GELADYIPEL…LSDDMGLHLM (285 aa). Substrate is bound by residues Ser-65, Asn-114, Glu-160, Asn-167, Tyr-191, Tyr-243, and Val-261. Residues 316–413 enclose the STAS domain; that stretch reads AVRSITRDGD…SDGTICKERV (98 aa).

This sequence belongs to the glutaminase family. Homotetramer.

The enzyme catalyses L-glutamine + H2O = L-glutamate + NH4(+). The polypeptide is Glutaminase (glsA) (Corynebacterium glutamicum (strain ATCC 13032 / DSM 20300 / JCM 1318 / BCRC 11384 / CCUG 27702 / LMG 3730 / NBRC 12168 / NCIMB 10025 / NRRL B-2784 / 534)).